Consider the following 369-residue polypeptide: MDSYEYTELLKKLNTKVQNISRVIKPQDIEIRLKEIEDIENRPEFWNDIKKASEIGKEKTKISNMLCKFKNVKSAISDAYELYELANAEDDEQTINSLFEDAQNLENKITNLEISMMLSGEDDSKNAIVSIHPGAGGTESNDWASMLYRMYLRFCEREGFKVETLDFQEGDEAGLKDVSFIVKGENAYGYLKAENGIHRLVRTSPFDSAGRRHTSFSSVMVSPEVDDDIAIEIEEKDLRLDYYRASGAGGQHVNKTESAVRITHIPTGIVVQCQNDRSQHKNKATAMKMLKSRLYEFELMKQQEANNAIEKSEIGWGHQIRSYVLFPYQQVKDTRSGEAYSQTDAILDGDIKKIIESVLISQKSSANKE.

Q251 is subject to N5-methylglutamine.

It belongs to the prokaryotic/mitochondrial release factor family. Post-translationally, methylated by PrmC. Methylation increases the termination efficiency of RF2.

Its subcellular location is the cytoplasm. Peptide chain release factor 2 directs the termination of translation in response to the peptide chain termination codons UGA and UAA. This chain is Peptide chain release factor 2, found in Campylobacter fetus subsp. fetus (strain 82-40).